The sequence spans 440 residues: Xaa-Pro dipeptidase (440 aa).

Residues Asp-244, Asp-255, His-336, Glu-381, and Glu-420 each contribute to the Mn(2+) site.

This sequence belongs to the peptidase M24B family. The cofactor is Mn(2+). The N-terminus is blocked.

It catalyses the reaction Xaa-L-Pro dipeptide + H2O = an L-alpha-amino acid + L-proline. The enzyme catalyses diisopropyl fluorophosphate + H2O = diisopropyl phosphate + fluoride + 2 H(+). Its function is as follows. Splits dipeptides with a prolyl or hydroxyprolyl residue in the C-terminal position and a nonpolar amino acid at the N-terminal position. Also catalyzes the hydrolysis of toxic organophosphorus cholinesterase-inhibiting compounds including nerve gases such as diisopropylfluorophosphate (DFP), O-isopropyl methylphosphonofluoridate (sarin), O-pinacolyl methylphosphonofluoridate (soman), and O-cyclohexyl methylphosphonofluoridate. This is Xaa-Pro dipeptidase (pepQ) from Pseudoalteromonas haloplanktis (Alteromonas haloplanktis).